The sequence spans 338 residues: Pyridoxal 5'-phosphate synthase subunit PdxS (338 aa).

Residue Asp-66 participates in D-ribose 5-phosphate binding. Catalysis depends on Lys-123, which acts as the Schiff-base intermediate with D-ribose 5-phosphate. Gly-195 is a D-ribose 5-phosphate binding site. A D-glyceraldehyde 3-phosphate-binding site is contributed by Lys-207. D-ribose 5-phosphate-binding positions include Gly-256 and 277–278 (GS).

Belongs to the PdxS/SNZ family. In the presence of PdxT, forms a dodecamer of heterodimers.

It carries out the reaction aldehydo-D-ribose 5-phosphate + D-glyceraldehyde 3-phosphate + L-glutamine = pyridoxal 5'-phosphate + L-glutamate + phosphate + 3 H2O + H(+). Its pathway is cofactor biosynthesis; pyridoxal 5'-phosphate biosynthesis. Catalyzes the formation of pyridoxal 5'-phosphate from ribose 5-phosphate (RBP), glyceraldehyde 3-phosphate (G3P) and ammonia. The ammonia is provided by the PdxT subunit. Can also use ribulose 5-phosphate and dihydroxyacetone phosphate as substrates, resulting from enzyme-catalyzed isomerization of RBP and G3P, respectively. The chain is Pyridoxal 5'-phosphate synthase subunit PdxS from Saccharolobus islandicus (strain Y.N.15.51 / Yellowstone #2) (Sulfolobus islandicus).